The following is a 191-amino-acid chain: Thymidylate kinase (191 aa).

7 to 14 contacts ATP; it reads GVDGAGKS.

It belongs to the thymidylate kinase family.

It carries out the reaction dTMP + ATP = dTDP + ADP. In terms of biological role, phosphorylation of dTMP to form dTDP in both de novo and salvage pathways of dTTP synthesis. The polypeptide is Thymidylate kinase (tmk) (Helicobacter pylori (strain ATCC 700392 / 26695) (Campylobacter pylori)).